A 624-amino-acid polypeptide reads, in one-letter code: Matrilin-4 (624 aa).

An N-terminal signal peptide occupies residues 1–21 (MRGPCCWPLSLLLLFLQSWET). One can recognise a VWFA 1 domain in the interval 36 to 215 (DLVFMIDSSR…EFGLQFQGRL (180 aa)). Asn-71 carries an N-linked (GlcNAc...) asparagine glycan. EGF-like domains follow at residues 217-257 (GKDL…KNCL), 258-298 (ALDL…RSCR), 299-339 (AIDY…RSCR), and 340-380 (VRDF…KSCD). Disulfide bonds link Cys-221–Cys-232, Cys-228–Cys-241, Cys-243–Cys-256, Cys-262–Cys-273, Cys-269–Cys-282, Cys-284–Cys-297, Cys-303–Cys-314, Cys-310–Cys-323, Cys-325–Cys-338, Cys-344–Cys-355, Cys-351–Cys-364, and Cys-366–Cys-379. An N-linked (GlcNAc...) asparagine glycan is attached at Asn-307. The region spanning 388–563 (DLVLLVDGSK…STMTHLLENL (176 aa)) is the VWFA 2 domain. Residues 590 to 623 (EFQGRTLGALESLTQNLARLTERLEELENQLASR) are a coiled coil.

As to quaternary structure, interacts with COMP. In terms of tissue distribution, lung, brain, sternum, kidney and heart.

It localises to the secreted. Its function is as follows. Major component of the extracellular matrix of cartilage. This is Matrilin-4 (Matn4) from Mus musculus (Mouse).